Consider the following 119-residue polypeptide: Large ribosomal subunit protein bL20 (119 aa).

It belongs to the bacterial ribosomal protein bL20 family. As to quaternary structure, part of the 50S ribosomal subunit.

Binds directly to 23S ribosomal RNA and is necessary for the in vitro assembly process of the 50S ribosomal subunit. It is not involved in the protein synthesizing functions of that subunit. The sequence is that of Large ribosomal subunit protein bL20 (rplT) from Bacillus subtilis (strain 168).